The chain runs to 431 residues: Enolase (431 aa).

Gln-163 is a (2R)-2-phosphoglycerate binding site. Glu-205 (proton donor) is an active-site residue. Mg(2+) contacts are provided by Asp-242, Glu-288, and Asp-315. Positions 340, 369, 370, and 391 each coordinate (2R)-2-phosphoglycerate. The Proton acceptor role is filled by Lys-340.

It belongs to the enolase family. Requires Mg(2+) as cofactor.

The protein localises to the cytoplasm. Its subcellular location is the secreted. It localises to the cell surface. It carries out the reaction (2R)-2-phosphoglycerate = phosphoenolpyruvate + H2O. It participates in carbohydrate degradation; glycolysis; pyruvate from D-glyceraldehyde 3-phosphate: step 4/5. Catalyzes the reversible conversion of 2-phosphoglycerate (2-PG) into phosphoenolpyruvate (PEP). It is essential for the degradation of carbohydrates via glycolysis. This is Enolase from Bacillus cereus (strain ZK / E33L).